We begin with the raw amino-acid sequence, 205 residues long: Small ribosomal subunit protein uS4 (205 aa).

Residues 1–12 (MSKRIQAKHKLD) show a composition bias toward basic residues. The interval 1 to 49 (MSKRIQAKHKLDRRMGQNIWGRPKSPVNRREYGPGQHGQRRKGKMSDFG) is disordered. An S4 RNA-binding domain is found at 94–155 (RRLDAVVYRA…SSRQLEIVIV (62 aa)).

This sequence belongs to the universal ribosomal protein uS4 family. As to quaternary structure, part of the 30S ribosomal subunit. Contacts protein S5. The interaction surface between S4 and S5 is involved in control of translational fidelity.

Functionally, one of the primary rRNA binding proteins, it binds directly to 16S rRNA where it nucleates assembly of the body of the 30S subunit. In terms of biological role, with S5 and S12 plays an important role in translational accuracy. The polypeptide is Small ribosomal subunit protein uS4 (Methylobacterium radiotolerans (strain ATCC 27329 / DSM 1819 / JCM 2831 / NBRC 15690 / NCIMB 10815 / 0-1)).